The sequence spans 154 residues: Endoribonuclease YbeY (154 aa).

3 residues coordinate Zn(2+): H116, H120, and H126.

This sequence belongs to the endoribonuclease YbeY family. Requires Zn(2+) as cofactor.

It is found in the cytoplasm. Functionally, single strand-specific metallo-endoribonuclease involved in late-stage 70S ribosome quality control and in maturation of the 3' terminus of the 16S rRNA. The polypeptide is Endoribonuclease YbeY (Chromohalobacter salexigens (strain ATCC BAA-138 / DSM 3043 / CIP 106854 / NCIMB 13768 / 1H11)).